A 107-amino-acid polypeptide reads, in one-letter code: Nucleoid-associated protein Mlg_1509 (107 aa).

The protein belongs to the YbaB/EbfC family. As to quaternary structure, homodimer.

It localises to the cytoplasm. The protein localises to the nucleoid. Its function is as follows. Binds to DNA and alters its conformation. May be involved in regulation of gene expression, nucleoid organization and DNA protection. The chain is Nucleoid-associated protein Mlg_1509 from Alkalilimnicola ehrlichii (strain ATCC BAA-1101 / DSM 17681 / MLHE-1).